The primary structure comprises 427 residues: Histidinol dehydrogenase (427 aa).

Residues tyrosine 123, glutamine 185, and asparagine 208 each coordinate NAD(+). Substrate-binding residues include serine 231, glutamine 253, and histidine 256. Positions 253 and 256 each coordinate Zn(2+). Residues glutamate 321 and histidine 322 each act as proton acceptor in the active site. Positions 322, 355, 409, and 414 each coordinate substrate. Aspartate 355 is a Zn(2+) binding site. Zn(2+) is bound at residue histidine 414.

Belongs to the histidinol dehydrogenase family. It depends on Zn(2+) as a cofactor.

The catalysed reaction is L-histidinol + 2 NAD(+) + H2O = L-histidine + 2 NADH + 3 H(+). It functions in the pathway amino-acid biosynthesis; L-histidine biosynthesis; L-histidine from 5-phospho-alpha-D-ribose 1-diphosphate: step 9/9. Catalyzes the sequential NAD-dependent oxidations of L-histidinol to L-histidinaldehyde and then to L-histidine. This chain is Histidinol dehydrogenase, found in Oceanobacillus iheyensis (strain DSM 14371 / CIP 107618 / JCM 11309 / KCTC 3954 / HTE831).